Here is a 75-residue protein sequence, read N- to C-terminus: Sec-independent protein translocase protein TatA (75 aa).

The helical transmembrane segment at 1–21 threads the bilayer; the sequence is MGSFSIWHWLVVLAIVLLVFG. Positions 40–75 are disordered; the sequence is KKGMRDEDKPNAQLGDESRSQDASRTAQDEHDRTPR.

Belongs to the TatA/E family. As to quaternary structure, the Tat system comprises two distinct complexes: a TatABC complex, containing multiple copies of TatA, TatB and TatC subunits, and a separate TatA complex, containing only TatA subunits. Substrates initially bind to the TatABC complex, which probably triggers association of the separate TatA complex to form the active translocon.

It localises to the cell inner membrane. Part of the twin-arginine translocation (Tat) system that transports large folded proteins containing a characteristic twin-arginine motif in their signal peptide across membranes. TatA could form the protein-conducting channel of the Tat system. The protein is Sec-independent protein translocase protein TatA of Stenotrophomonas maltophilia (strain R551-3).